Here is a 301-residue protein sequence, read N- to C-terminus: 4-hydroxy-tetrahydrodipicolinate synthase (301 aa).

Threonine 46 contributes to the pyruvate binding site. Tyrosine 134 functions as the Proton donor/acceptor in the catalytic mechanism. Lysine 162 serves as the catalytic Schiff-base intermediate with substrate. Residue isoleucine 203 participates in pyruvate binding.

This sequence belongs to the DapA family. As to quaternary structure, homotetramer; dimer of dimers.

Its subcellular location is the cytoplasm. The enzyme catalyses L-aspartate 4-semialdehyde + pyruvate = (2S,4S)-4-hydroxy-2,3,4,5-tetrahydrodipicolinate + H2O + H(+). The protein operates within amino-acid biosynthesis; L-lysine biosynthesis via DAP pathway; (S)-tetrahydrodipicolinate from L-aspartate: step 3/4. Its function is as follows. Catalyzes the condensation of (S)-aspartate-beta-semialdehyde [(S)-ASA] and pyruvate to 4-hydroxy-tetrahydrodipicolinate (HTPA). The sequence is that of 4-hydroxy-tetrahydrodipicolinate synthase from Anaplasma marginale (strain St. Maries).